The sequence spans 1476 residues: Membrane-associated guanylate kinase, WW and PDZ domain-containing protein 3 (1476 aa).

The 91-residue stretch at 18 to 108 folds into the PDZ 1 domain; that stretch reads CAVSWAGPPG…PIRLKTVKPG (91 aa). The segment at 18–108 is interaction with ADRB1 and TGFA; the sequence is CAVSWAGPPG…PIRLKTVKPG (91 aa). In terms of domain architecture, Guanylate kinase-like spans 116–290; sequence RHYLSLQFQK…SSMDFRNYMM (175 aa). 123 to 130 is an ATP binding site; that stretch reads FQKGSIDH. Residues 184–266 form a disordered region; sequence TYDGNFYGTP…ETREMHSETS (83 aa). Residues 193-204 are compositionally biased toward pro residues; sequence PKPPAEPSPFQP. Serine 236 is subject to Phosphoserine. The span at 238–247 shows a compositional bias: acidic residues; sequence LPEEEEDEDK. WW domains lie at 296–329 and 342–375; these read EPLP…DPRL and GELP…NPVE. Residues 413–495 form the PDZ 2 domain; sequence RASLKKSTMG…NQYVNLTLCR (83 aa). The interval 413–495 is interaction with PTEN; the sequence is RASLKKSTMG…NQYVNLTLCR (83 aa). The tract at residues 551-575 is disordered; that stretch reads LASDRLNGPSESSEQRASLASSGSS. Positions 559–575 are enriched in polar residues; that stretch reads PSESSEQRASLASSGSS. Positions 581–657 constitute a PDZ 3 domain; that stretch reads TIPLIKGPKG…GADVPLLILR (77 aa). At serine 598 the chain carries Phosphoserine. Residues 664–691 are disordered; it reads TKTAKTKTDTKENSGSLETINEPIPQPM. Serine 702 carries the post-translational modification Phosphoserine. One can recognise a PDZ 4 domain in the interval 729–811; sequence DVFLRKQESG…NGHVLLTVRR (83 aa). Positions 729–811 are interaction with ADGRB1; that stretch reads DVFLRKQESG…NGHVLLTVRR (83 aa). The interval 818–844 is disordered; the sequence is KQPEDESHQAFSQNGSPRLNRAELPTR. Serine 833 and serine 916 each carry phosphoserine. Residues 852–939 enclose the PDZ 5 domain; that stretch reads DVTLQRKENE…TVTLTVVAEE (88 aa). The segment at 852–939 is interaction with LPAR2 and GRIN2B; the sequence is DVTLQRKENE…TVTLTVVAEE (88 aa). The disordered stretch occupies residues 939–966; it reads EEHHGPPSGTNSARQSPALQHRPMGQAQ. Over residues 946-956 the composition is skewed to polar residues; the sequence is SGTNSARQSPA. Positions 1022–1104 constitute a PDZ 6 domain; that stretch reads PVELERGPRG…KVLLLLRPGT (83 aa). Disordered stretches follow at residues 1109–1151 and 1168–1476; these read DHGD…ATED and TVQE…DKQL. Positions 1114 to 1123 are enriched in polar residues; the sequence is DTNSPSSSNV. Basic and acidic residues-rich tracts occupy residues 1193–1211 and 1230–1265; these read SKKD…RLKG and RHSE…ESKG. Residues 1285 to 1304 show a composition bias toward polar residues; that stretch reads SSSPKKQQKIGGNSLSNTEG. 2 stretches are compositionally biased toward basic and acidic residues: residues 1317–1340 and 1350–1361; these read HPRD…KDLK and KSPEKKSSKVDE. Serine 1321 is modified (phosphoserine). The span at 1363-1373 shows a compositional bias: polar residues; sequence SLPSKKTSSTA. Residues 1419–1437 are compositionally biased toward basic and acidic residues; that stretch reads ADDHKGRESEVTDRCRERA.

Belongs to the MAGUK family. As to quaternary structure, interacts with ADRB1, ADGRB1, LPAR2/EDG4, GRIN2B, PTEN, and PTPRB. Interacts with unidentified tyrosine phosphorylated proteins. Interacts with FZD4, FZD7, TGFA and VANGL2. Interacts with DLL1. Interacts with PRRG4 (via cytoplasmic domain). In terms of tissue distribution, widely expressed. Colocalizes with TGFA in neurons in the cortex and dentate gyrus, as well as in ependymal cells and some astrocytes (at protein level). Present in lens epithelium.

The protein resides in the cell membrane. It is found in the cell junction. It localises to the tight junction. Its subcellular location is the nucleus. Acts as a scaffolding protein at cell-cell junctions, thereby regulating various cellular and signaling processes. Cooperates with PTEN to modulate the kinase activity of AKT1. Its interaction with PTPRB and tyrosine phosphorylated proteins suggests that it may link receptor tyrosine phosphatase with its substrates at the plasma membrane. In polarized epithelial cells, involved in efficient trafficking of TGFA to the cell surface. Regulates the ability of LPAR2 to activate ERK and RhoA pathways. Regulates the JNK signaling cascade via its interaction with FZD4 and VANGL2. In Mus musculus (Mouse), this protein is Membrane-associated guanylate kinase, WW and PDZ domain-containing protein 3 (Magi3).